The sequence spans 138 residues: MLQPKRRKYRKEQKGRNTGIATRGNAVSFGEFGLKAIGRGRLTARQIEAARRAMTRHIKRGGRIWIRIFPDKPISHKPAEVRMGNGKGNPEYYVAEIQPGKMLYEMDGVTEELAREAFRLAAAKLPLKTTFIVRQLGA.

Basic residues predominate over residues 1-13; it reads MLQPKRRKYRKEQ. Residues 1–20 are disordered; that stretch reads MLQPKRRKYRKEQKGRNTGI.

Belongs to the universal ribosomal protein uL16 family. Part of the 50S ribosomal subunit.

Functionally, binds 23S rRNA and is also seen to make contacts with the A and possibly P site tRNAs. The sequence is that of Large ribosomal subunit protein uL16 from Paraburkholderia phytofirmans (strain DSM 17436 / LMG 22146 / PsJN) (Burkholderia phytofirmans).